The following is a 316-amino-acid chain: L-lactate dehydrogenase (316 aa).

NAD(+) contacts are provided by residues V15, D37, K42, Y68, and 82 to 83 (GL). Residues Q85, R91, and 123–126 (NPVD) each bind substrate. NAD(+)-binding positions include 121 to 123 (ASN) and T146. Position 151–154 (151–154 (DTSR)) interacts with substrate. R156 and H171 together coordinate beta-D-fructose 1,6-bisphosphate. Residue H178 is the Proton acceptor of the active site. Phosphotyrosine is present on Y222. Position 231 (T231) interacts with substrate.

It belongs to the LDH/MDH superfamily. LDH family. Homotetramer.

It localises to the cytoplasm. It carries out the reaction (S)-lactate + NAD(+) = pyruvate + NADH + H(+). Its pathway is fermentation; pyruvate fermentation to lactate; (S)-lactate from pyruvate: step 1/1. Its activity is regulated as follows. Allosterically activated by fructose 1,6-bisphosphate (FBP). In terms of biological role, catalyzes the conversion of lactate to pyruvate. This is L-lactate dehydrogenase from Borrelia garinii subsp. bavariensis (strain ATCC BAA-2496 / DSM 23469 / PBi) (Borreliella bavariensis).